Reading from the N-terminus, the 229-residue chain is Non-structural protein P8 (229 aa).

A run of 2 helical transmembrane segments spans residues 119-139 (IIHMTLLIAAVVALLTSVCTL) and 162-182 (SLNPMLGVVNVGATFLMMVCA).

The protein belongs to the orbivirus NS3 family. Forms homooligomers via coiled-coil motif. Interacts with host OPTN; this interaction inhibits innate immune response.

The protein localises to the host cell membrane. Its subcellular location is the host Golgi apparatus. Functionally, plays a role in the inhibition of host innate immune response. Interacts with host OPTN and thus inhibits the recruitment of TBK1 to the host Golgi apparatus. In turn, downstream partner IRF3 cannot be activated and IFN-beta production is impaired. Its function is as follows. Facilitates viral particle release either by increasing plasma membrane permeability through a viroporin-like activity or by viral budding. The chain is Non-structural protein P8 (Segment-10) from Antilocapra americana (Pronghorn).